A 340-amino-acid polypeptide reads, in one-letter code: Protein-arginine kinase (340 aa).

The region spanning 14–244 (IVITTRIRLA…EQIINQENLS (231 aa)) is the Phosphagen kinase C-terminal domain. ATP is bound by residues 17–21 (TTRIR), histidine 81, arginine 115, 166–170 (RASVM), and 197–202 (RGLWGE).

The protein belongs to the ATP:guanido phosphotransferase family.

The catalysed reaction is L-arginyl-[protein] + ATP = N(omega)-phospho-L-arginyl-[protein] + ADP + H(+). Functionally, catalyzes the specific phosphorylation of arginine residues in proteins. The chain is Protein-arginine kinase from Clostridium acetobutylicum (strain ATCC 824 / DSM 792 / JCM 1419 / IAM 19013 / LMG 5710 / NBRC 13948 / NRRL B-527 / VKM B-1787 / 2291 / W).